A 130-amino-acid chain; its full sequence is Small ribosomal subunit protein uS11 (130 aa).

Belongs to the universal ribosomal protein uS11 family. Part of the 30S ribosomal subunit. Interacts with proteins S7 and S18. Binds to IF-3.

Functionally, located on the platform of the 30S subunit, it bridges several disparate RNA helices of the 16S rRNA. Forms part of the Shine-Dalgarno cleft in the 70S ribosome. The sequence is that of Small ribosomal subunit protein uS11 from Xylella fastidiosa (strain M12).